Here is a 526-residue protein sequence, read N- to C-terminus: Transcription factor kayak (526 aa).

2 disordered regions span residues 71–165 and 178–221; these read PPLA…GTGG and RNTN…NKQA. Low complexity-rich tracts occupy residues 78 to 87 and 133 to 153; these read NNNNNNNNNG and ISDT…HMMG. Residues 154-165 are compositionally biased toward gly residues; the sequence is NSGGGNGGGTGG. Polar residues predominate over residues 178–187; that stretch reads RNTNTSNSAT. The 64-residue stretch at 208–271 folds into the bZIP domain; it reads EEKRRIRRER…NQLEYFLQAH (64 aa). The interval 210-229 is basic motif; that stretch reads KRRIRRERNKQAAARCRKRR. The leucine-zipper stretch occupies residues 236–264; that stretch reads LTEEVELLEKRGENLKKEMELLNETKNQL. A compositionally biased stretch (low complexity) spans 301-322; sequence GSCGSGSSHHNNNSNSNDSSSG. 2 disordered regions span residues 301–345 and 504–526; these read GSCG…DLKP and TSQN…LVSL. The segment covering 330 to 340 has biased composition (polar residues); the sequence is TLNSTGRSNSP. A Phosphoserine modification is found at Ser339.

Belongs to the bZIP family. Fos subfamily. Homodimer. Heterodimer with Jra. The kay-Jra heterodimer binds more stably to the AP-1 site than either of the two proteins alone.

It localises to the nucleus. Functionally, developmentally regulated transcription factor AP-1 binds and recognizes the enhancer DNA sequence: 5'-TGA[CG]TCA-3'. May play a role in the function or determination of a particular subset of cells in the developing embryo. It is able to carry out its function either independently of or in conjunction with Jra. This is Transcription factor kayak from Drosophila persimilis (Fruit fly).